Consider the following 192-residue polypeptide: Rhomboid protease GlpG (192 aa).

Residues 1-10 are Cytoplasmic-facing; the sequence is MKNFLAQQGK. Residues 11–31 form a helical membrane-spanning segment; that stretch reads ITLILTALCVLIYLAQQLGFE. Over 32 to 57 the chain is Periplasmic; the sequence is DDIMYLMHYPAYEEQDSEVWRYISHT. Residues 58–78 traverse the membrane as a helical segment; that stretch reads LVHLSNLHILFNLSWFFIFGG. Residues 79–82 are Cytoplasmic-facing; sequence MIER. Residues 83-103 traverse the membrane as a helical segment; the sequence is TFGSVKLLMLYVVASAITGYV. The Periplasmic portion of the chain corresponds to 104-107; the sequence is QNYV. A helical membrane pass occupies residues 108–128; that stretch reads SGPAFFGLSGVVYAVLGYVFI. The active-site Nucleophile is the Ser116. Over 129-141 the chain is Cytoplasmic; the sequence is RDKLNHHLFDLPE. A helical transmembrane segment spans residues 142 to 162; it reads GFFTMLLVGIALGFISPLFGV. Residue Glu163 is a topological domain, periplasmic. A helical membrane pass occupies residues 164–184; the sequence is MGNAAHISGLIVGLIWGFIDS. The active site involves His169. The Cytoplasmic portion of the chain corresponds to 185–192; that stretch reads KLRKNSLE.

This sequence belongs to the peptidase S54 family.

The protein localises to the cell inner membrane. The enzyme catalyses Cleaves type-1 transmembrane domains using a catalytic dyad composed of serine and histidine that are contributed by different transmembrane domains.. Functionally, rhomboid-type serine protease that catalyzes intramembrane proteolysis. The sequence is that of Rhomboid protease GlpG (glpG) from Haemophilus influenzae (strain ATCC 51907 / DSM 11121 / KW20 / Rd).